Here is a 745-residue protein sequence, read N- to C-terminus: uncharacterized protein (745 aa).

In terms of domain architecture, HTH araC/xylS-type spans 158-256; sequence NQVCDYIELH…HQTPKQYRGD (99 aa). 2 DNA-binding regions (H-T-H motif) span residues 175 to 196 and 223 to 246; these read SELSEYVGWSESHLSKKFTESL and ITDIALQNGFSSAASFARTFKHFT.

This is an uncharacterized protein from Staphylococcus aureus (strain Mu50 / ATCC 700699).